Here is a 159-residue protein sequence, read N- to C-terminus: uncharacterized protein (159 aa).

It localises to the mitochondrion. This is an uncharacterized protein from Arabidopsis thaliana (Mouse-ear cress).